The chain runs to 425 residues: Dihydroorotase (425 aa).

The Zn(2+) site is built by histidine 61 and histidine 63. Substrate-binding positions include 63–65 and asparagine 95; that span reads HLR. Positions 146, 175, 224, and 293 each coordinate Zn(2+). Lysine 146 carries the post-translational modification N6-carboxylysine. Residue aspartate 293 is part of the active site. Substrate is bound by residues histidine 297 and 311–312; that span reads PG.

The protein belongs to the metallo-dependent hydrolases superfamily. DHOase family. Class I DHOase subfamily. Requires Zn(2+) as cofactor.

The enzyme catalyses (S)-dihydroorotate + H2O = N-carbamoyl-L-aspartate + H(+). It participates in pyrimidine metabolism; UMP biosynthesis via de novo pathway; (S)-dihydroorotate from bicarbonate: step 3/3. Functionally, catalyzes the reversible cyclization of carbamoyl aspartate to dihydroorotate. In Aeropyrum pernix (strain ATCC 700893 / DSM 11879 / JCM 9820 / NBRC 100138 / K1), this protein is Dihydroorotase.